Consider the following 25-residue polypeptide: Growth-blocking peptide (25 aa).

Cys7 and Cys19 are oxidised to a cystine. Gln25 is modified (glutamine amide).

This sequence belongs to the GBP/PSP1/paralytic peptide family. As to expression, hemolymph.

Functionally, biogenic peptide that prevents, in lepidopteran, the onset of metamorphosis from larva to pupa. This growth-blocking peptide has repressive activity against juvenile hormone esterase. This is Growth-blocking peptide from Cotesia kariyai (Parasitic wasp).